The primary structure comprises 803 residues: Carbon monoxide dehydrogenase large chain (803 aa).

A 4-hydroxyarginine modification is found at arginine 384. Cysteine 385 is a Cu(+) binding site. Glutamate 757 is a binding site for Mo-molybdopterin cytosine dinucleotide.

As to quaternary structure, dimer of heterotrimers. Each heterotrimer consists of a large, a medium and a small subunit. The cofactor is Cu(+). Mo-molybdopterin cytosine dinucleotide serves as cofactor.

The catalysed reaction is CO + a quinone + H2O = a quinol + CO2. Catalyzes the oxidation of carbon monoxide to carbon dioxide. In Hydrogenophaga pseudoflava (Pseudomonas carboxydoflava), this protein is Carbon monoxide dehydrogenase large chain (cutL).